A 314-amino-acid polypeptide reads, in one-letter code: Ribosomal RNA small subunit methyltransferase H (314 aa).

S-adenosyl-L-methionine contacts are provided by residues 32 to 34 (GGH), Asp-52, Phe-79, Asp-100, and Gln-107.

It belongs to the methyltransferase superfamily. RsmH family.

The protein localises to the cytoplasm. The enzyme catalyses cytidine(1402) in 16S rRNA + S-adenosyl-L-methionine = N(4)-methylcytidine(1402) in 16S rRNA + S-adenosyl-L-homocysteine + H(+). In terms of biological role, specifically methylates the N4 position of cytidine in position 1402 (C1402) of 16S rRNA. The chain is Ribosomal RNA small subunit methyltransferase H from Shouchella clausii (strain KSM-K16) (Alkalihalobacillus clausii).